Consider the following 117-residue polypeptide: UPF0102 protein RHOS4_03930 (117 aa).

It belongs to the UPF0102 family.

This is UPF0102 protein RHOS4_03930 from Cereibacter sphaeroides (strain ATCC 17023 / DSM 158 / JCM 6121 / CCUG 31486 / LMG 2827 / NBRC 12203 / NCIMB 8253 / ATH 2.4.1.) (Rhodobacter sphaeroides).